Consider the following 1397-residue polypeptide: DNA-directed RNA polymerase subunit beta' (1397 aa).

The Zn(2+) site is built by C75, C77, C90, and C93. D465, D467, and D469 together coordinate Mg(2+). Residues C819, C893, C900, and C903 each contribute to the Zn(2+) site.

It belongs to the RNA polymerase beta' chain family. As to quaternary structure, the RNAP catalytic core consists of 2 alpha, 1 beta, 1 beta' and 1 omega subunit. When a sigma factor is associated with the core the holoenzyme is formed, which can initiate transcription. Requires Mg(2+) as cofactor. The cofactor is Zn(2+).

It carries out the reaction RNA(n) + a ribonucleoside 5'-triphosphate = RNA(n+1) + diphosphate. DNA-dependent RNA polymerase catalyzes the transcription of DNA into RNA using the four ribonucleoside triphosphates as substrates. The chain is DNA-directed RNA polymerase subunit beta' from Acinetobacter baumannii (strain ACICU).